Here is a 265-residue protein sequence, read N- to C-terminus: Ni-sirohydrochlorin a,c-diamide reductive cyclase complex, component CfbC (265 aa).

Belongs to the NifH/BchL/ChlL family. In terms of assembly, homodimer. The Ni-sirohydrochlorin a,c-diamide reductive cyclase complex is composed of a NifH homolog component CfbC and a NifD homolog component CfbD. Requires [4Fe-4S] cluster as cofactor.

The catalysed reaction is Ni-sirohydrochlorin a,c-diamide + 3 AH2 + ATP + H2O = 15,17(3)-seco-F430-17(3)-acid + 3 A + ADP + phosphate. In terms of biological role, involved in the biosynthesis of the unique nickel-containing tetrapyrrole coenzyme F430, the prosthetic group of methyl-coenzyme M reductase (MCR), which plays a key role in methanogenesis and anaerobic methane oxidation. Catalyzes both the six-electron reduction of the tetrahydroporphyrin ring system and the gamma-lactamization of the c-acetamide side chain of Ni-sirohydrochlorin a,c-diamide to yield 15,17(3)-seco-F430-17(3)-acid (seco-F430), the last intermediate in the biosynthesis of the coenzyme F430. The protein is Ni-sirohydrochlorin a,c-diamide reductive cyclase complex, component CfbC of Methanosarcina barkeri (strain Fusaro / DSM 804).